An 84-amino-acid polypeptide reads, in one-letter code: uncharacterized protein (84 aa).

Helical transmembrane passes span 7–27 and 52–72; these read HVNF…ILCI and ITII…INPC.

It is found in the membrane. This is an uncharacterized protein from Saccharomyces cerevisiae (strain ATCC 204508 / S288c) (Baker's yeast).